The sequence spans 361 residues: Histidinol-phosphate aminotransferase (361 aa).

The residue at position 221 (Lys-221) is an N6-(pyridoxal phosphate)lysine.

Belongs to the class-II pyridoxal-phosphate-dependent aminotransferase family. Histidinol-phosphate aminotransferase subfamily. In terms of assembly, homodimer. Requires pyridoxal 5'-phosphate as cofactor.

It carries out the reaction L-histidinol phosphate + 2-oxoglutarate = 3-(imidazol-4-yl)-2-oxopropyl phosphate + L-glutamate. The protein operates within amino-acid biosynthesis; L-histidine biosynthesis; L-histidine from 5-phospho-alpha-D-ribose 1-diphosphate: step 7/9. The polypeptide is Histidinol-phosphate aminotransferase (Symbiobacterium thermophilum (strain DSM 24528 / JCM 14929 / IAM 14863 / T)).